Here is a 348-residue protein sequence, read N- to C-terminus: Dihydroorotase (348 aa).

Residues histidine 14 and histidine 16 each contribute to the Zn(2+) site. Residues histidine 16 to arginine 18 and asparagine 42 contribute to the substrate site. Residues lysine 100, histidine 137, and histidine 175 each contribute to the Zn(2+) site. N6-carboxylysine is present on lysine 100. Histidine 137 serves as a coordination point for substrate. Leucine 220 provides a ligand contact to substrate. Aspartate 248 contacts Zn(2+). The active site involves aspartate 248. Substrate contacts are provided by histidine 252 and alanine 264.

This sequence belongs to the metallo-dependent hydrolases superfamily. DHOase family. Class II DHOase subfamily. Homodimer. Requires Zn(2+) as cofactor.

The catalysed reaction is (S)-dihydroorotate + H2O = N-carbamoyl-L-aspartate + H(+). Its pathway is pyrimidine metabolism; UMP biosynthesis via de novo pathway; (S)-dihydroorotate from bicarbonate: step 3/3. Catalyzes the reversible cyclization of carbamoyl aspartate to dihydroorotate. This is Dihydroorotase from Pseudomonas aeruginosa (strain UCBPP-PA14).